The chain runs to 207 residues: Small ribosomal subunit protein uS4 (207 aa).

The tract at residues 31–53 (KAKFDSKPGQHGRTSGARTSDFG) is disordered. The S4 RNA-binding domain occupies 97-157 (SRLDNVVYRM…EKSKKQARIV (61 aa)).

Belongs to the universal ribosomal protein uS4 family. Part of the 30S ribosomal subunit. Contacts protein S5. The interaction surface between S4 and S5 is involved in control of translational fidelity.

One of the primary rRNA binding proteins, it binds directly to 16S rRNA where it nucleates assembly of the body of the 30S subunit. Functionally, with S5 and S12 plays an important role in translational accuracy. The protein is Small ribosomal subunit protein uS4 of Paracidovorax citrulli (strain AAC00-1) (Acidovorax citrulli).